Here is a 166-residue protein sequence, read N- to C-terminus: Putative tRNA (cytidine(34)-2'-O)-methyltransferase (166 aa).

Residues L83, G109, I130, and S138 each coordinate S-adenosyl-L-methionine.

It belongs to the class IV-like SAM-binding methyltransferase superfamily. RNA methyltransferase TrmH family. TrmL subfamily.

The protein resides in the cytoplasm. It carries out the reaction cytidine(34) in tRNA + S-adenosyl-L-methionine = 2'-O-methylcytidine(34) in tRNA + S-adenosyl-L-homocysteine + H(+). The enzyme catalyses 5-carboxymethylaminomethyluridine(34) in tRNA(Leu) + S-adenosyl-L-methionine = 5-carboxymethylaminomethyl-2'-O-methyluridine(34) in tRNA(Leu) + S-adenosyl-L-homocysteine + H(+). In terms of biological role, could methylate the ribose at the nucleotide 34 wobble position in tRNA. The sequence is that of Putative tRNA (cytidine(34)-2'-O)-methyltransferase from Mycoplasma pneumoniae (strain ATCC 29342 / M129 / Subtype 1) (Mycoplasmoides pneumoniae).